A 38-amino-acid polypeptide reads, in one-letter code: Photosystem II reaction center protein L (38 aa).

Residues 17 to 37 (SLYWGLLLIFVLAILFSNYIF) form a helical membrane-spanning segment.

Belongs to the PsbL family. In terms of assembly, PSII is composed of 1 copy each of membrane proteins PsbA, PsbB, PsbC, PsbD, PsbE, PsbF, PsbH, PsbI, PsbJ, PsbK, PsbL, PsbM, PsbT, PsbX, PsbY, PsbZ, Psb30/Ycf12, at least 3 peripheral proteins of the oxygen-evolving complex and a large number of cofactors. It forms dimeric complexes.

Its subcellular location is the plastid. It localises to the chloroplast thylakoid membrane. One of the components of the core complex of photosystem II (PSII). PSII is a light-driven water:plastoquinone oxidoreductase that uses light energy to abstract electrons from H(2)O, generating O(2) and a proton gradient subsequently used for ATP formation. It consists of a core antenna complex that captures photons, and an electron transfer chain that converts photonic excitation into a charge separation. This subunit is found at the monomer-monomer interface and is required for correct PSII assembly and/or dimerization. In Chlorokybus atmophyticus (Soil alga), this protein is Photosystem II reaction center protein L.